We begin with the raw amino-acid sequence, 418 residues long: Zinc metalloproteinase nas-8 (418 aa).

A signal peptide spans 1–28 (MMNRASLCRIAVLLCILHLSHLIDSTYA). The propeptide occupies 29-100 (QSYLTEKDFL…TSKLKSGVRR (72 aa)). The Peptidase M12A domain maps to 101 to 296 (NGVTSVIKRW…LKINKLYNCP (196 aa)). 5 disulfide bridges follow: cysteine 143-cysteine 295, cysteine 165-cysteine 184, cysteine 347-cysteine 381, cysteine 354-cysteine 374, and cysteine 361-cysteine 378. Zn(2+) is bound at residue histidine 192. Glutamate 193 is an active-site residue. Zn(2+)-binding residues include histidine 196 and histidine 202. The 35-residue stretch at 347-381 (CSDRTNLCWRWLDRCRSYFFEKIMKEFCALSCGYC) folds into the ShKT domain.

It depends on Zn(2+) as a cofactor.

The protein resides in the secreted. The catalysed reaction is Hydrolysis of peptide bonds in substrates containing five or more amino acids, preferentially with Ala in P1', and Pro in P2'.. With respect to regulation, inhibited by ethylene glycol-bis(2-aminoethylether)-N,N,N,N-tetraacetic acid (EGTA), ethylenediaminetetraacetic acid (EDTA) and o-phenanthroline. Metalloprotease. The chain is Zinc metalloproteinase nas-8 from Steinernema carpocapsae (Entomopathogenic nematode).